The sequence spans 361 residues: Chorismate synthase (361 aa).

NADP(+) contacts are provided by R48 and R54. FMN contacts are provided by residues 125–127 (RSS), 238–239 (NA), G278, 293–297 (KPTSS), and R319.

This sequence belongs to the chorismate synthase family. As to quaternary structure, homotetramer. The cofactor is FMNH2.

It catalyses the reaction 5-O-(1-carboxyvinyl)-3-phosphoshikimate = chorismate + phosphate. It functions in the pathway metabolic intermediate biosynthesis; chorismate biosynthesis; chorismate from D-erythrose 4-phosphate and phosphoenolpyruvate: step 7/7. Functionally, catalyzes the anti-1,4-elimination of the C-3 phosphate and the C-6 proR hydrogen from 5-enolpyruvylshikimate-3-phosphate (EPSP) to yield chorismate, which is the branch point compound that serves as the starting substrate for the three terminal pathways of aromatic amino acid biosynthesis. This reaction introduces a second double bond into the aromatic ring system. The polypeptide is Chorismate synthase (Sodalis glossinidius (strain morsitans)).